Reading from the N-terminus, the 1405-residue chain is Protein translocase subunit SecA (1405 aa).

The segment at 1 to 1099 (MHMKIKKFKK…SDYKKLNEDE (1099 aa)) is protein translocase subunit SecA. Residues Gln-88, 106–110 (GEGKS), and Asp-494 contribute to the ATP site. The tract at residues 1100–1405 (SDDDIKAFYK…LDYLKENNKK (306 aa)) is unknown.

The protein belongs to the SecA family. Monomer and homodimer. Part of the essential Sec protein translocation apparatus which comprises SecA, SecYEG and auxiliary proteins SecDF. Other proteins may also be involved.

The protein resides in the cell membrane. The protein localises to the cytoplasm. It carries out the reaction ATP + H2O + cellular proteinSide 1 = ADP + phosphate + cellular proteinSide 2.. Part of the Sec protein translocase complex. Interacts with the SecYEG preprotein conducting channel. Has a central role in coupling the hydrolysis of ATP to the transfer of proteins into and across the cell membrane, serving as an ATP-driven molecular motor driving the stepwise translocation of polypeptide chains across the membrane. The chain is Protein translocase subunit SecA from Malacoplasma penetrans (strain HF-2) (Mycoplasma penetrans).